Reading from the N-terminus, the 543-residue chain is Chaperonin GroEL (543 aa).

ATP contacts are provided by residues 29–32, 86–90, G413, 478–480, and D494; these read TLGP, DGTTT, and DAL. The segment at 524–543 is disordered; sequence PEPEAPAVPAGMPGGMGGMY.

It belongs to the chaperonin (HSP60) family. As to quaternary structure, forms a cylinder of 14 subunits composed of two heptameric rings stacked back-to-back. Interacts with the co-chaperonin GroES.

The protein resides in the cytoplasm. It carries out the reaction ATP + H2O + a folded polypeptide = ADP + phosphate + an unfolded polypeptide.. Functionally, together with its co-chaperonin GroES, plays an essential role in assisting protein folding. The GroEL-GroES system forms a nano-cage that allows encapsulation of the non-native substrate proteins and provides a physical environment optimized to promote and accelerate protein folding. This is Chaperonin GroEL from Ruminiclostridium cellulolyticum (strain ATCC 35319 / DSM 5812 / JCM 6584 / H10) (Clostridium cellulolyticum).